The sequence spans 64 residues: Prokaryotic ubiquitin-like protein Pup (64 aa).

A disordered region spans residues 1–37 (MAQEQTQRAGGGEDDETTGGDGSAGQERREKLAAETD). Residues 21-58 (DGSAGQERREKLAAETDDLLDEIDDVLEENAEDFVRAY) form an ARC ATPase binding region. Residues 24–52 (AGQERREKLAAETDDLLDEIDDVLEENAE) adopt a coiled-coil conformation. Glutamine 64 is subject to Deamidated glutamine. Glutamine 64 is covalently cross-linked (Isoglutamyl lysine isopeptide (Gln-Lys) (interchain with K-? in acceptor proteins)).

It belongs to the prokaryotic ubiquitin-like protein family. As to quaternary structure, strongly interacts with the proteasome-associated ATPase ARC through a hydrophobic interface; the interacting region of Pup lies in its C-terminal half. There is one Pup binding site per ARC hexamer ring. Is modified by deamidation of its C-terminal glutamine to glutamate by the deamidase Dop, a prerequisite to the subsequent pupylation process.

The protein operates within protein degradation; proteasomal Pup-dependent pathway. Its function is as follows. Protein modifier that is covalently attached to lysine residues of substrate proteins, thereby targeting them for proteasomal degradation. The tagging system is termed pupylation. The polypeptide is Prokaryotic ubiquitin-like protein Pup (Rhodococcus erythropolis (strain PR4 / NBRC 100887)).